A 208-amino-acid chain; its full sequence is Uracil phosphoribosyltransferase (208 aa).

Residues R78, R103, and 130–138 (DPMLATGGS) contribute to the 5-phospho-alpha-D-ribose 1-diphosphate site. Residues I193 and 198-200 (GDA) each bind uracil. D199 lines the 5-phospho-alpha-D-ribose 1-diphosphate pocket.

It belongs to the UPRTase family. Mg(2+) serves as cofactor.

The enzyme catalyses UMP + diphosphate = 5-phospho-alpha-D-ribose 1-diphosphate + uracil. It participates in pyrimidine metabolism; UMP biosynthesis via salvage pathway; UMP from uracil: step 1/1. Allosterically activated by GTP. In terms of biological role, catalyzes the conversion of uracil and 5-phospho-alpha-D-ribose 1-diphosphate (PRPP) to UMP and diphosphate. The chain is Uracil phosphoribosyltransferase from Aliivibrio salmonicida (strain LFI1238) (Vibrio salmonicida (strain LFI1238)).